The primary structure comprises 347 residues: Ileal sodium/bile acid cotransporter (347 aa).

Topologically, residues 1-29 (MSNLTVGCLANATVCEGASCVAPESNFNA) are extracellular. Residues Asn3 and Asn11 are each glycosylated (N-linked (GlcNAc...) asparagine). A helical transmembrane segment spans residues 30–50 (ILSVVLSTVLTILLALVMFSM). Over 51–83 (GCNVEIKKFLGHIRRPWGIFIGFLCQFGIMPLT) the chain is Cytoplasmic. The helical transmembrane segment at 84 to 104 (GFVLAVAFGIMPIQAVVVLIM) threads the bilayer. The Extracellular segment spans residues 105–127 (GCCPGGTASNILAYWVDGDMDLS). Residues 128-148 (VSMTTCSTLLALGMMPLCLYV) traverse the membrane as a helical segment. The Cytoplasmic portion of the chain corresponds to 149-158 (YTKMWVDSGT). The chain crosses the membrane as a helical span at residues 159 to 179 (IVIPYDNIGTSLVALVVPVSI). Over 180-196 (GMFVNHKWPQKAKIILK) the chain is Extracellular. A helical membrane pass occupies residues 197–217 (VGSIAGAVLIVLIAVVGGILY). Topologically, residues 218-225 (QSAWIIEP) are cytoplasmic. A helical transmembrane segment spans residues 226 to 246 (KLWIIGTIFPMAGYSLGFFLA). At 247-289 (RIAGQPWYRCRTVALETGMQNTQLCSTIVQLSFSPEDLTYVFT) the chain is on the extracellular side. The chain crosses the membrane as a helical span at residues 290-310 (FPLIYSIFQIAFAAIFLGIYV). At 311–347 (AYRKCHGKNDAEFPDIKDTKTEPESSFHQMNGGFQPE) the chain is on the cytoplasmic side. Residues 323-335 (FPDIKDTKTEPES) show a composition bias toward basic and acidic residues. The segment at 323–347 (FPDIKDTKTEPESSFHQMNGGFQPE) is disordered. The residue at position 336 (Ser336) is a Phosphoserine.

This sequence belongs to the bile acid:sodium symporter (BASS) (TC 2.A.28) family. As to quaternary structure, monomer and homodimer.

It localises to the membrane. It carries out the reaction taurocholate(out) + 2 Na(+)(out) = taurocholate(in) + 2 Na(+)(in). The catalysed reaction is cholate(out) + 2 Na(+)(out) = cholate(in) + 2 Na(+)(in). The enzyme catalyses taurochenodeoxycholate(out) + 2 Na(+)(out) = taurochenodeoxycholate(in) + 2 Na(+)(in). It catalyses the reaction tauroursodeoxycholate(out) + 2 Na(+)(out) = tauroursodeoxycholate(in) + 2 Na(+)(in). It carries out the reaction glycocholate(out) + 2 Na(+)(out) = glycocholate(in) + 2 Na(+)(in). The catalysed reaction is tauronorcholate(out) + 2 Na(+)(out) = tauronorcholate(in) + 2 Na(+)(in). The enzyme catalyses tauroallocholate(out) + 2 Na(+)(out) = tauroallocholate(in) + 2 Na(+)(in). It catalyses the reaction taurodeoxycholate(out) + 2 Na(+)(out) = taurodeoxycholate(in) + 2 Na(+)(in). It carries out the reaction tauro-beta-muricholate(out) + 2 Na(+)(out) = tauro-beta-muricholate(in) + 2 Na(+)(in). Its function is as follows. Plays a critical role in the sodium-dependent reabsorption of bile acids from the lumen of the small intestine. Transports various bile acids, unconjugated or conjugated, such as cholate and taurocholate. Also responsible for bile acid transport in the renal proximal tubules, a salvage mechanism that helps conserve bile acids. Works collaboratively with the Na(+)-taurocholate cotransporting polypeptide (NTCP), the organic solute transporter (OST), and the bile salt export pump (BSEP), to ensure efficacious biological recycling of bile acids during enterohepatic circulation. This Oryctolagus cuniculus (Rabbit) protein is Ileal sodium/bile acid cotransporter (SLC10A2).